We begin with the raw amino-acid sequence, 333 residues long: Tetraacyldisaccharide 4'-kinase (333 aa).

55–62 (TAGGNGKT) provides a ligand contact to ATP.

This sequence belongs to the LpxK family.

The catalysed reaction is a lipid A disaccharide + ATP = a lipid IVA + ADP + H(+). The protein operates within glycolipid biosynthesis; lipid IV(A) biosynthesis; lipid IV(A) from (3R)-3-hydroxytetradecanoyl-[acyl-carrier-protein] and UDP-N-acetyl-alpha-D-glucosamine: step 6/6. Transfers the gamma-phosphate of ATP to the 4'-position of a tetraacyldisaccharide 1-phosphate intermediate (termed DS-1-P) to form tetraacyldisaccharide 1,4'-bis-phosphate (lipid IVA). The polypeptide is Tetraacyldisaccharide 4'-kinase (Proteus mirabilis (strain HI4320)).